The sequence spans 482 residues: uncharacterized protein (482 aa).

WD repeat units follow at residues 92–133 and 191–230; these read DMPN…REPI and GHEH…CLCK.

It localises to the cytoplasm. The protein resides in the nucleus. This is an uncharacterized protein from Schizosaccharomyces pombe (strain 972 / ATCC 24843) (Fission yeast).